We begin with the raw amino-acid sequence, 102 residues long: MEKLKFEIQSVPLTLEKAPVICGVVGSGNLEVLVSQHDQADVCQVEVTTSAVGFQHVWQSVLNEFAQRHAVAGLKLQLNDMGATPAVVNLRLSQAISMFKGE.

Serine 27 is modified (O-(phosphoribosyl dephospho-coenzyme A)serine).

It belongs to the MdcC family. Post-translationally, covalently binds the prosthetic group of malonate decarboxylase.

It is found in the cytoplasm. Its function is as follows. Subunit of malonate decarboxylase, it is an acyl carrier protein to which acetyl and malonyl thioester residues are bound via a 2'-(5''-phosphoribosyl)-3'-dephospho-CoA prosthetic group and turn over during the catalytic mechanism. This is Malonate decarboxylase acyl carrier protein from Acinetobacter calcoaceticus.